A 173-amino-acid chain; its full sequence is Crossover junction endodeoxyribonuclease RuvC (173 aa).

Residues Asp-8, Glu-67, and Asp-139 contribute to the active site. Residues Asp-8, Glu-67, and Asp-139 each contribute to the Mg(2+) site.

The protein belongs to the RuvC family. As to quaternary structure, homodimer which binds Holliday junction (HJ) DNA. The HJ becomes 2-fold symmetrical on binding to RuvC with unstacked arms; it has a different conformation from HJ DNA in complex with RuvA. In the full resolvosome a probable DNA-RuvA(4)-RuvB(12)-RuvC(2) complex forms which resolves the HJ. The cofactor is Mg(2+).

Its subcellular location is the cytoplasm. It catalyses the reaction Endonucleolytic cleavage at a junction such as a reciprocal single-stranded crossover between two homologous DNA duplexes (Holliday junction).. The RuvA-RuvB-RuvC complex processes Holliday junction (HJ) DNA during genetic recombination and DNA repair. Endonuclease that resolves HJ intermediates. Cleaves cruciform DNA by making single-stranded nicks across the HJ at symmetrical positions within the homologous arms, yielding a 5'-phosphate and a 3'-hydroxyl group; requires a central core of homology in the junction. The consensus cleavage sequence is 5'-(A/T)TT(C/G)-3'. Cleavage occurs on the 3'-side of the TT dinucleotide at the point of strand exchange. HJ branch migration catalyzed by RuvA-RuvB allows RuvC to scan DNA until it finds its consensus sequence, where it cleaves and resolves the cruciform DNA. This Aeromonas salmonicida (strain A449) protein is Crossover junction endodeoxyribonuclease RuvC.